The primary structure comprises 90 residues: U7-theraphotoxin-Hhn1a 8 (90 aa).

The signal sequence occupies residues 1 to 19; the sequence is MKTAIFTVVLALAVFAVLS. Residues 20 to 50 constitute a propeptide that is removed on maturation; that stretch reads FGWEANEKALSEEFTELIHEKGAASETEARE. Cystine bridges form between cysteine 51/cysteine 65, cysteine 58/cysteine 70, and cysteine 64/cysteine 81.

Belongs to the neurotoxin 10 (Hwtx-1) family. 13 (Hntx-13) subfamily. Expressed by the venom gland.

It localises to the secreted. Ion channel inhibitor. The chain is U7-theraphotoxin-Hhn1a 8 from Cyriopagopus hainanus (Chinese bird spider).